Here is a 386-residue protein sequence, read N- to C-terminus: 17-hydroxy-3-oxo-4-pregnene-20-carboxyl-CoA lyase (386 aa).

The active-site Proton acceptor is tyrosine 292. Catalysis depends on tyrosine 342, which acts as the Proton donor.

Belongs to the thiolase-like superfamily. As to quaternary structure, homodimer. Interacts with the ChsH1/ChsH2 hydratase via the DUF35 C-terminal region of ChsH2 (ChsH2-DUF35). The ChsH1-ChsH2-Ltp2 protein complex is composed of two protomers that form a heterohexameric structure through the Ltp2 dimerization interface.

The catalysed reaction is 17-hydroxy-3-oxochol-4-en-22-oyl-CoA = androst-4-ene-3,17-dione + propanoyl-CoA. Its pathway is steroid metabolism; cholesterol degradation. Its function is as follows. Involved in cholesterol side chain degradation. When associated with the ChsH1/ChsH2 hydratase, catalyzes the retroaldol cleavage of 17-hydroxy-3-oxo-4-pregnene-20-carboxyl-CoA (17-HOPC-CoA) produced by the hydratase, forming androst-4-ene-3,17-dione and propionyl-CoA. The polypeptide is 17-hydroxy-3-oxo-4-pregnene-20-carboxyl-CoA lyase (Mycobacterium tuberculosis (strain ATCC 25618 / H37Rv)).